We begin with the raw amino-acid sequence, 175 residues long: uncharacterized protein (175 aa).

Helical transmembrane passes span 25-45 (MIAIGGTIGTGLFLGAGTTIS), 46-66 (ATGPSVIFIYAIMGLFFFFLL), 97-117 (FAGWTYWIGILFACMAELTAV), 124-144 (WLPGLPAWLIEVSVLGLLTLL), and 155-175 (TEFWFAMIKIIAIISLVVTGI).

It belongs to the amino acid-polyamine-organocation (APC) superfamily.

It localises to the cell membrane. This is an uncharacterized protein from Lactobacillus delbrueckii subsp. lactis.